The sequence spans 228 residues: 2,3-bisphosphoglycerate-dependent phosphoglycerate mutase (228 aa).

Substrate contacts are provided by residues 8 to 15, 21 to 22, Arg-60, 87 to 90, Lys-98, 114 to 115, and 183 to 184; these read RHGQSVWN, TG, ERHY, RR, and GN. His-9 functions as the Tele-phosphohistidine intermediate in the catalytic mechanism. Residue Glu-87 is the Proton donor/acceptor of the active site.

The protein belongs to the phosphoglycerate mutase family. BPG-dependent PGAM subfamily. In terms of assembly, homodimer.

It catalyses the reaction (2R)-2-phosphoglycerate = (2R)-3-phosphoglycerate. It participates in carbohydrate degradation; glycolysis; pyruvate from D-glyceraldehyde 3-phosphate: step 3/5. Its function is as follows. Catalyzes the interconversion of 2-phosphoglycerate and 3-phosphoglycerate. The polypeptide is 2,3-bisphosphoglycerate-dependent phosphoglycerate mutase (Rhodospirillum centenum (strain ATCC 51521 / SW)).